A 446-amino-acid chain; its full sequence is ATP-dependent RNA helicase SUB2 (446 aa).

N-acetylserine is present on serine 2. A phosphoserine mark is found at serine 13 and serine 37. Over residues 23–41 (ASKAAEAGETGAATSATEG) the composition is skewed to low complexity. The tract at residues 23–52 (ASKAAEAGETGAATSATEGDNNNNTAAGDK) is disordered. The short motif at 62–90 (TGFKDFLLKPELSRAIIDCGFEHPSEVQQ) is the Q motif element. One can recognise a Helicase ATP-binding domain in the interval 93 to 268 (IPQSIHGTDV…RRFLQNPLEI (176 aa)). 106–113 (AKSGLGKT) lines the ATP pocket. Threonine 169 carries the phosphothreonine modification. The short motif at 215-218 (DECD) is the DECD box element. The Helicase C-terminal domain occupies 280-441 (GLQQYYIKLE…EFPEEGIDPS (162 aa)).

This sequence belongs to the DEAD box helicase family. DECD subfamily. In terms of assembly, component of the TREX complex composed of at least SUB2, TEX1, YRA1 and the four THO complex components: HPR1, MFT1, THO2 and THP1. Interacts with HPR1, YRA1, and YRA2. SUB2 may mediate the interaction between the THO complex and YRA1. Associates with growing mRNP complexes during transcription. This association requires the presence of HPR1. Also interacts with SAC3. Interacts with THO1 in the presence of RNA; this interaction facilitates RNA binding of SUB2.

It localises to the nucleus. The enzyme catalyses ATP + H2O = ADP + phosphate + H(+). Functionally, ATP-binding RNA helicase component of the TREX complex involved in transcription elongation and required for the export of mRNA out of the nucleus. SUB2 also plays a role in pre-mRNA splicing and spliceosome assembly. May be involved in rDNA and telomeric silencing, and maintenance of genome integrity. Associates with THO1, which facilitates RNA binding of SUB2 and likely plays a role in mRNA export. The sequence is that of ATP-dependent RNA helicase SUB2 (SUB2) from Saccharomyces cerevisiae (strain ATCC 204508 / S288c) (Baker's yeast).